Reading from the N-terminus, the 253-residue chain is 5'-nucleotidase SurE 2 (253 aa).

A divalent metal cation contacts are provided by Asp-8, Asp-9, Ser-39, and Asn-92.

Belongs to the SurE nucleotidase family. A divalent metal cation serves as cofactor.

It is found in the cytoplasm. It carries out the reaction a ribonucleoside 5'-phosphate + H2O = a ribonucleoside + phosphate. Nucleotidase that shows phosphatase activity on nucleoside 5'-monophosphates. The chain is 5'-nucleotidase SurE 2 from Burkholderia lata (strain ATCC 17760 / DSM 23089 / LMG 22485 / NCIMB 9086 / R18194 / 383).